Here is a 228-residue protein sequence, read N- to C-terminus: uncharacterized protein (228 aa).

Residues 11 to 78 enclose the HTH gntR-type domain; sequence PPVNQQIYRI…PQRGSYVNKI (68 aa). Positions 38–57 form a DNA-binding region, H-T-H motif; sequence EKEVSVRFNVSRQPVREAFI.

This is an uncharacterized protein from Escherichia coli O6:H1 (strain CFT073 / ATCC 700928 / UPEC).